A 322-amino-acid chain; its full sequence is Glycerol-3-phosphate dehydrogenase [NAD(P)+] (322 aa).

Residues W11, R31, R32, and K101 each coordinate NADPH. Residues K101 and G130 each contribute to the sn-glycerol 3-phosphate site. Residue A134 participates in NADPH binding. K184, D237, S247, R248, and N249 together coordinate sn-glycerol 3-phosphate. K184 functions as the Proton acceptor in the catalytic mechanism. R248 provides a ligand contact to NADPH. Residues V270 and E272 each coordinate NADPH.

This sequence belongs to the NAD-dependent glycerol-3-phosphate dehydrogenase family.

It localises to the cytoplasm. The catalysed reaction is sn-glycerol 3-phosphate + NAD(+) = dihydroxyacetone phosphate + NADH + H(+). The enzyme catalyses sn-glycerol 3-phosphate + NADP(+) = dihydroxyacetone phosphate + NADPH + H(+). It functions in the pathway membrane lipid metabolism; glycerophospholipid metabolism. Its function is as follows. Catalyzes the reduction of the glycolytic intermediate dihydroxyacetone phosphate (DHAP) to sn-glycerol 3-phosphate (G3P), the key precursor for phospholipid synthesis. The sequence is that of Glycerol-3-phosphate dehydrogenase [NAD(P)+] from Thermus thermophilus (strain ATCC BAA-163 / DSM 7039 / HB27).